The following is a 357-amino-acid chain: tRNA-specific 2-thiouridylase MnmA (357 aa).

Residues alanine 11–serine 18 and leucine 37 contribute to the ATP site. The active-site Nucleophile is the cysteine 102. Cysteine 102 and cysteine 197 are joined by a disulfide. Position 126 (glycine 126) interacts with ATP. The interaction with tRNA stretch occupies residues lysine 148–glutamine 150. Cysteine 197 (cysteine persulfide intermediate) is an active-site residue. The interval arginine 301–tyrosine 302 is interaction with tRNA.

Belongs to the MnmA/TRMU family.

It localises to the cytoplasm. The enzyme catalyses S-sulfanyl-L-cysteinyl-[protein] + uridine(34) in tRNA + AH2 + ATP = 2-thiouridine(34) in tRNA + L-cysteinyl-[protein] + A + AMP + diphosphate + H(+). In terms of biological role, catalyzes the 2-thiolation of uridine at the wobble position (U34) of tRNA, leading to the formation of s(2)U34. The protein is tRNA-specific 2-thiouridylase MnmA of Dehalococcoides mccartyi (strain ATCC BAA-2266 / KCTC 15142 / 195) (Dehalococcoides ethenogenes (strain 195)).